The following is a 117-amino-acid chain: Eukaryotic translation initiation factor 4E-binding protein 1 (117 aa).

Composition is skewed to polar residues over residues 1-12 (MSAGSSCSQTPS) and 33-47 (YSTTPGGTLFSTTPG). The disordered stretch occupies residues 1–47 (MSAGSSCSQTPSRAIPTRRVALGDGVQLPPGDYSTTPGGTLFSTTPG). N-acetylserine is present on S2. Phosphothreonine is present on residues T36 and T40. A Phosphoserine modification is found at S43. Phosphothreonine; by MTOR is present on T45. Phosphothreonine is present on T49. Position 53 is a phosphotyrosine (Y53). The short motif at 53-59 (YDRKFLM) is the YXXXXLphi motif element. K56 participates in a covalent cross-link: Glycyl lysine isopeptide (Lys-Gly) (interchain with G-Cter in ubiquitin). S64 carries the post-translational modification Phosphoserine; by DYRK2, MAPK1, MAPK3 and MTOR. Positions 64–117 (SPVAKTPPKDLPTIPGVTSPTSDEPPMQASQSHLHSSPEDKRAGGEESQFEMDI) are disordered. The residue at position 69 (T69) is a Phosphothreonine; by MTOR. Residue T76 is modified to Phosphothreonine. Polar residues predominate over residues 79-98 (GVTSPTSDEPPMQASQSHLH). 3 positions are modified to phosphoserine: S82, S95, and S99. A compositionally biased stretch (basic and acidic residues) spans 99 to 108 (SSPEDKRAGG). S100 carries the phosphoserine; by DYRK2 modification. The residue at position 111 (S111) is a Phosphoserine. The TOS motif motif lies at 113 to 117 (FEMDI).

The protein belongs to the eIF4E-binding protein family. In terms of assembly, hypophosphorylated EIF4EBP1 competes with EIF4G1/EIF4G3 to interact with EIF4E; insulin stimulated MAP-kinase (MAPK1 and MAPK3) or mTORC1 phosphorylation of EIF4EBP1 causes dissociation of the complex allowing EIF4G1/EIF4G3 to bind and consequent initiation of translation. Interacts (via TOS motif) with RPTOR; promoting phosphorylation by mTORC1. Post-translationally, phosphorylated on serine and threonine residues in response to insulin, EGF and PDGF. Phosphorylation at Thr-36, Thr-45, Ser-64 and Thr-69, corresponding to the hyperphosphorylated form, is regulated by mTORC1 and abolishes binding to EIF4E. Ubiquitinated: when eIF4E levels are low, hypophosphorylated form is ubiquitinated by the BCR(KLHL25) complex, leading to its degradation and serving as a homeostatic mechanism to maintain translation and prevent eIF4E inhibition when eIF4E levels are low. Not ubiquitinated when hyperphosphorylated (at Thr-36, Thr-45, Ser-64 and Thr-69) or associated with eIF4E. In terms of tissue distribution, expressed in all tissues examined; highest levels in fat and skeletal tissue, lowest levels in kidney.

The protein localises to the cytoplasm. The protein resides in the nucleus. In terms of biological role, repressor of translation initiation that regulates EIF4E activity by preventing its assembly into the eIF4F complex: hypophosphorylated form competes with EIF4G1/EIF4G3 and strongly binds to EIF4E, leading to repress translation. In contrast, hyperphosphorylated form dissociates from EIF4E, allowing interaction between EIF4G1/EIF4G3 and EIF4E, leading to initiation of translation. Mediates the regulation of protein translation by hormones, growth factors and other stimuli that signal through the MAP kinase and mTORC1 pathways. This Rattus norvegicus (Rat) protein is Eukaryotic translation initiation factor 4E-binding protein 1 (Eif4ebp1).